A 499-amino-acid chain; its full sequence is Myocyte-specific enhancer factor 2A (499 aa).

One can recognise an MADS-box domain in the interval 3 to 57 (RKKIQITRIMDERNRQVTFTKRKFGLMKKAYELSVLCDCEIALIIFNSSNKLFQY). Residue Lys4 is modified to N6-acetyllysine. The segment at residues 58–86 (ASTDMDKVLLKYTEYNEPHESRTNSDIVE) is a DNA-binding region (mef2-type). N6-acetyllysine is present on Lys117. A compositionally biased stretch (low complexity) spans 173-185 (TSTTMLSPPQTTL). The disordered stretch occupies residues 173–269 (TSTTMLSPPQ…GGGLGMNNRK (97 aa)). Positions 210–233 (TDLTVPNGAGTSPVGNGVWNSRAS) are enriched in polar residues. Lys248, Lys253, Lys269, and Lys281 each carry N6-acetyllysine. The segment at 265 to 282 (MNNRKPDLRVVIPPSSKG) is required for interaction with MAPKs. The segment at 288–295 (TEEDELEL) is beta domain. Positions 380–392 (VSGSQLSQGSNLS) are enriched in low complexity. The segment at 380–499 (VSGSQLSQGS…KRMRMDTWVT (120 aa)) is disordered. Lys402 carries the post-translational modification N6-acetyllysine; alternate. A Glycyl lysine isopeptide (Lys-Gly) (interchain with G-Cter in SUMO); alternate cross-link involves residue Lys402. A compositionally biased stretch (pro residues) spans 421–436 (QQPPQQPQPPQPPQQP). Low complexity predominate over residues 445-458 (SPVDSLSSSSSSYD). Basic and acidic residues-rich tracts occupy residues 459–469 (GSDREDPRSDF) and 480–499 (NSEDRESPSVKRMRMDTWVT).

In terms of assembly, binds DNA as a homo- or heterodimer. In terms of processing, sumoylation on Lys-402 is enhanced by PIAS1 and represses transcriptional activity. Has no effect on nuclear location nor on DNA binding. Sumoylated by SUMO1 and, to a lesser extent by SUMO2 and SUMO3. Acetylation on Lys-402 activates transcriptional activity. In terms of tissue distribution, expressed in both embryonic and adult tissues with high expression in heart and skeletal muscle. Also expressed in gut, lung and brain of 15 dpc embryos and adults.

The protein resides in the nucleus. Functionally, transcriptional activator which binds specifically to the MEF2 element, 5'-YTA[AT](4)TAR-3', found in numerous muscle-specific genes. Mediates cellular functions in skeletal and cardiac muscle development,. This chain is Myocyte-specific enhancer factor 2A (MEF2A), found in Gallus gallus (Chicken).